The chain runs to 863 residues: Leucine--tRNA ligase (863 aa).

Residues 42–52 carry the 'HIGH' region motif; it reads PYPSGRLHMGH. The 'KMSKS' region motif lies at 618-622; the sequence is KMSKS. Lys-621 is a binding site for ATP.

This sequence belongs to the class-I aminoacyl-tRNA synthetase family.

Its subcellular location is the cytoplasm. It catalyses the reaction tRNA(Leu) + L-leucine + ATP = L-leucyl-tRNA(Leu) + AMP + diphosphate. This is Leucine--tRNA ligase from Colwellia psychrerythraea (strain 34H / ATCC BAA-681) (Vibrio psychroerythus).